The primary structure comprises 202 residues: MCTGGCARCLGGTLIPLAVFAVLANILLFFPGGKVVDDNSHLSDEVWYFGGILGSGVLMIFPALVFLGLQNNDCCGCCGNESCGKRFAMFTSTLFAVVGFLGAAYSFIVSAVSINKGPKCFMTNNTWGYPFHDGDYLNDQALWSKCEEPRDVVPWNLTLFSILLVIGGIQMVLCAIQVINGLLGTLCGDCQCCGCCGGDRPV.

The Cytoplasmic portion of the chain corresponds to 1–9 (MCTGGCARC). A helical transmembrane segment spans residues 10–30 (LGGTLIPLAVFAVLANILLFF). Over 31-48 (PGGKVVDDNSHLSDEVWY) the chain is Extracellular. The chain crosses the membrane as a helical span at residues 49–69 (FGGILGSGVLMIFPALVFLGL). At 70–93 (QNNDCCGCCGNESCGKRFAMFTST) the chain is on the cytoplasmic side. Residues 94 to 114 (LFAVVGFLGAAYSFIVSAVSI) traverse the membrane as a helical segment. At 115–158 (NKGPKCFMTNNTWGYPFHDGDYLNDQALWSKCEEPRDVVPWNLT) the chain is on the extracellular side. Asparagine 156 carries an N-linked (GlcNAc...) asparagine glycan. A helical transmembrane segment spans residues 159-179 (LFSILLVIGGIQMVLCAIQVI). Residues 180–202 (NGLLGTLCGDCQCCGCCGGDRPV) lie on the Cytoplasmic side of the membrane.

Belongs to the L6 tetraspanin family. Expressed in liver and testis. Up-regulated in regenerating liver after partial hepatectomy.

The protein resides in the membrane. Its function is as follows. Regulates the adhesive and proliferative status of intestinal epithelial cells. Can mediate density-dependent cell proliferation. The sequence is that of Transmembrane 4 L6 family member 4 (Tm4sf4) from Rattus norvegicus (Rat).